Reading from the N-terminus, the 165-residue chain is Peptide methionine sulfoxide reductase MsrA (165 aa).

Residue Cys11 is part of the active site.

It belongs to the MsrA Met sulfoxide reductase family.

It carries out the reaction L-methionyl-[protein] + [thioredoxin]-disulfide + H2O = L-methionyl-(S)-S-oxide-[protein] + [thioredoxin]-dithiol. It catalyses the reaction [thioredoxin]-disulfide + L-methionine + H2O = L-methionine (S)-S-oxide + [thioredoxin]-dithiol. Its function is as follows. Has an important function as a repair enzyme for proteins that have been inactivated by oxidation. Catalyzes the reversible oxidation-reduction of methionine sulfoxide in proteins to methionine. This Ureaplasma parvum serovar 3 (strain ATCC 27815 / 27 / NCTC 11736) protein is Peptide methionine sulfoxide reductase MsrA.